The following is a 179-amino-acid chain: Pyridoxal 5'-phosphate synthase subunit PdxT (179 aa).

Residue Gly-48 to Ser-50 coordinates L-glutamine. The Nucleophile role is filled by Cys-79. Residues Arg-101 and Ile-127–Arg-128 contribute to the L-glutamine site. Catalysis depends on charge relay system residues His-163 and Glu-165.

It belongs to the glutaminase PdxT/SNO family. As to quaternary structure, in the presence of PdxS, forms a dodecamer of heterodimers. Only shows activity in the heterodimer.

The enzyme catalyses aldehydo-D-ribose 5-phosphate + D-glyceraldehyde 3-phosphate + L-glutamine = pyridoxal 5'-phosphate + L-glutamate + phosphate + 3 H2O + H(+). It carries out the reaction L-glutamine + H2O = L-glutamate + NH4(+). It participates in cofactor biosynthesis; pyridoxal 5'-phosphate biosynthesis. Catalyzes the hydrolysis of glutamine to glutamate and ammonia as part of the biosynthesis of pyridoxal 5'-phosphate. The resulting ammonia molecule is channeled to the active site of PdxS. The sequence is that of Pyridoxal 5'-phosphate synthase subunit PdxT from Francisella tularensis subsp. holarctica (strain FTNF002-00 / FTA).